A 340-amino-acid chain; its full sequence is Gallate dioxygenase (340 aa).

Histidine 45 (proton donor) is an active-site residue. Histidine 113 serves as the catalytic Proton acceptor.

It belongs to the LigB/MhpB extradiol dioxygenase family. Fe(2+) is required as a cofactor.

It carries out the reaction 3,4,5-trihydroxybenzoate + O2 = (1E)-4-oxobut-1-ene-1,2,4-tricarboxylate + 2 H(+). Functionally, ring-cleavage dioxygenase that acts specifically on gallate to produce the keto-tautomer of 4-oxalomesaconate. Mediates the first step of gallate degradation pathway. This Pseudomonas putida (strain ATCC 47054 / DSM 6125 / CFBP 8728 / NCIMB 11950 / KT2440) protein is Gallate dioxygenase (galA).